Reading from the N-terminus, the 119-residue chain is MWRKCLGKVVLLGCALPCVAARISVSPKLGAYGDARGGPDLWGLCIKATDAEEVSGDPDDTEMEYLPPRYAPETPLVGLDVAFRAENGFLLQLTVDAALTRLMFRGQCLAGYSFRPGGG.

This sequence to T.pallidum TP_0127, TP_0315 and TP_0619.

This is an uncharacterized protein from Treponema pallidum (strain Nichols).